Reading from the N-terminus, the 92-residue chain is YcgL domain-containing protein Sfri_1738 (92 aa).

In terms of domain architecture, YcgL spans 1 to 85; sequence MICAVYKSGR…PQINLLEQHK (85 aa).

This Shewanella frigidimarina (strain NCIMB 400) protein is YcgL domain-containing protein Sfri_1738.